The primary structure comprises 711 residues: C-Jun-amino-terminal kinase-interacting protein 1 (711 aa).

The segment at Met-1–Ile-27 is disordered. Positions Ala-14–Leu-25 are enriched in low complexity. Phosphoserine is present on residues Ser-15, Ser-29, and Ser-40. The interval Ala-78 to Thr-371 is disordered. At Thr-103 the chain carries Phosphothreonine; by MAPK8, MAPK9 and MAPK10. A compositionally biased stretch (acidic residues) spans Gly-105–Glu-116. The interval Pro-127–Pro-285 is JNK-binding domain (JBD). Low complexity predominate over residues Gly-139–Gly-149. Residue Ser-152 is modified to Phosphoserine. Residues Arg-157–Thr-176 form a minimal inhibitory domain (MID) region. Residues Thr-162 to Leu-182 show a composition bias toward polar residues. Residues Ser-181, Ser-187, Ser-193, Ser-195, and Ser-196 each carry the phosphoserine modification. A compositionally biased stretch (polar residues) spans Arg-194–Gln-204. At Thr-205 the chain carries Phosphothreonine; by MAPK8, MAPK9 and MAPK10. Ser-214 is subject to Phosphoserine. Over residues Asp-228–Gln-244 the composition is skewed to polar residues. The segment covering Ile-267 to Ala-277 has biased composition (basic and acidic residues). Positions Leu-283–Ser-471 are interaction with MAP3K7. 9 positions are modified to phosphoserine: Ser-311, Ser-328, Ser-330, Ser-340, Ser-355, Ser-366, Ser-369, Ser-407, and Ser-409. 2 consecutive short sequence motifs (D-box) follow at residues Arg-353 to Pro-360 and Arg-364 to Ser-372. At Thr-411 the chain carries Phosphothreonine. The tract at residues Glu-429–Glu-451 is disordered. A phosphoserine mark is found at Ser-444 and Ser-447. Thr-448 is subject to Phosphothreonine. Phosphoserine is present on residues Ser-469, Ser-471, Ser-472, and Ser-473. The interval Ser-471–Ile-660 is interaction with VRK2. One can recognise an SH3 domain in the interval Glu-488–Lys-549. A PID domain is found at Ser-561–Glu-700.

The protein belongs to the JIP scaffold family. As to quaternary structure, forms homo- or heterooligomeric complexes. Binds specific components of the JNK signaling pathway namely, MAPK8/JNK1, MAPK9/JNK2, MAPK10/JNK3, MAP2K7/MKK7, MAP3K11/MLK3 and DLK1. Also binds the proline-rich domain-containing splice variant of apolipoprotein E receptor 2 (ApoER2). Interacts, via the PID domain, with ARHGEF28. Binds the cytoplasmic tails of LRP1 and LRP2 (Megalin). Binds the TPR motif-containing C-terminal of KNS2, then the pre-assembled MAPK8IP1 scaffolding complexes are transported as a cargo of kinesin, to the required subcellular location. Interacts with the cytoplasmic domain of APP. Interacts with DCLK2. Interacts with MAP3K7/TAK1. Interacts with isoform 1 and isoform 2 of VRK2. Found in a complex with SH3RF1, RAC1, MAP3K11/MLK3, MAP2K7/MKK7 and MAPK8/JNK1. Found in a complex with SH3RF1, RAC2, MAP3K7/TAK1, MAP2K7/MKK7, MAPK8/JNK1 and MAPK9/JNK2. Interacts with SH3RF2. In terms of processing, phosphorylated by MAPK8, MAPK9 and MAPK10. Phosphorylation on Thr-103 is also necessary for the dissociation and activation of MAP3K12. Phosphorylated by isoform 1 and isoform 2 of VRK2. Hyperphosphorylated during mitosis following activation of stress-activated and MAP kinases. Ubiquitinated. Two preliminary events are required to prime for ubiquitination; phosphorylation and an increased in intracellular calcium concentration. Then, the calcium influx initiates ubiquitination and degradation by the ubiquitin-proteasome pathway. In terms of tissue distribution, highly expressed in brain. Expressed in neurons, localizing to neurite tips in differentiating cells. Also expressed in the pancreas, testis and prostate. Low levels in heart, ovary and small intestine. Decreased levels in pancreatic beta cells sensitize cells to IL-1-beta-induced apoptosis.

It localises to the cytoplasm. The protein localises to the perinuclear region. Its subcellular location is the nucleus. The protein resides in the endoplasmic reticulum membrane. It is found in the mitochondrion membrane. Functionally, the JNK-interacting protein (JIP) group of scaffold proteins selectively mediates JNK signaling by aggregating specific components of the MAPK cascade to form a functional JNK signaling module. Required for JNK activation in response to excitotoxic stress. Cytoplasmic MAPK8IP1 causes inhibition of JNK-regulated activity by retaining JNK in the cytoplasm and inhibiting JNK phosphorylation of c-Jun. May also participate in ApoER2-specific reelin signaling. Directly, or indirectly, regulates GLUT2 gene expression and beta-cell function. Appears to have a role in cell signaling in mature and developing nerve terminals. May function as a regulator of vesicle transport, through interactions with the JNK-signaling components and motor proteins. Functions as an anti-apoptotic protein and whose level seems to influence the beta-cell death or survival response. Acts as a scaffold protein that coordinates with SH3RF1 in organizing different components of the JNK pathway, including RAC1 or RAC2, MAP3K11/MLK3 or MAP3K7/TAK1, MAP2K7/MKK7, MAPK8/JNK1 and/or MAPK9/JNK2 into a functional multiprotein complex to ensure the effective activation of the JNK signaling pathway. Regulates the activation of MAPK8/JNK1 and differentiation of CD8(+) T-cells. This Homo sapiens (Human) protein is C-Jun-amino-terminal kinase-interacting protein 1 (MAPK8IP1).